The chain runs to 155 residues: Ribosome maturation factor RimP (155 aa).

It belongs to the RimP family.

It localises to the cytoplasm. Its function is as follows. Required for maturation of 30S ribosomal subunits. The polypeptide is Ribosome maturation factor RimP (Prochlorococcus marinus (strain MIT 9312)).